A 234-amino-acid polypeptide reads, in one-letter code: Golgi SNAP receptor complex member 1 (234 aa).

Topologically, residues 1 to 212 (MSETWEALRK…MQKIKTKKQK (212 aa)) are cytoplasmic. Residues 54-121 (VTTEIEGLIE…RDNVDQVLQR (68 aa)) are a coiled coil. Residues 213–233 (NTMILAGVISACLIFTIFWII) form a helical; Anchor for type IV membrane protein membrane-spanning segment. A topological domain (vesicular) is located at residue Asn234.

It belongs to the GOSR1 family. As to quaternary structure, component of several multiprotein Golgi SNARE complexes.

It localises to the golgi apparatus membrane. Its function is as follows. Involved in transport from the ER to the Golgi apparatus as well as in intra-Golgi transport. It belongs to a super-family of proteins called t-SNAREs or soluble NSF (N-ethylmaleimide-sensitive factor) attachment protein receptor. Cooperates with ykt-6 for proper expression of Golgi-resident proteins. Required along with ykt-6 for normal embryonic development, seam cell division or differentiation, and ray formation. The protein is Golgi SNAP receptor complex member 1 of Caenorhabditis briggsae.